The following is a 260-amino-acid chain: Acetylglutamate kinase (260 aa).

Substrate-binding positions include 46–47, R68, and N160; that span reads GG.

Belongs to the acetylglutamate kinase family. ArgB subfamily.

The protein localises to the cytoplasm. It carries out the reaction N-acetyl-L-glutamate + ATP = N-acetyl-L-glutamyl 5-phosphate + ADP. It functions in the pathway amino-acid biosynthesis; L-arginine biosynthesis; N(2)-acetyl-L-ornithine from L-glutamate: step 2/4. Catalyzes the ATP-dependent phosphorylation of N-acetyl-L-glutamate. This is Acetylglutamate kinase from Shewanella sp. (strain MR-4).